Reading from the N-terminus, the 360-residue chain is DnaJ homolog subfamily C member 25 (360 aa).

The chain crosses the membrane as a helical span at residues 20–40; the sequence is WMLLAPLLPALLLVRPAGALV. The J domain maps to 49 to 124; sequence DCYEVLGVSR…ETRKDYDYML (76 aa). 2 helical membrane-spanning segments follow: residues 150–170 and 244–264; these read VVIL…WWNS and LLLF…VWYC.

It belongs to the DNAJC25 family.

It is found in the membrane. This chain is DnaJ homolog subfamily C member 25 (DNAJC25), found in Homo sapiens (Human).